The sequence spans 180 residues: Insulin-like growth factor 2 (180 aa).

The first 24 residues, Met-1–Ala-24, serve as a signal peptide directing secretion. Residues Ala-25–Phe-52 are b. 3 disulfide bridges follow: Cys-33/Cys-71, Cys-45/Cys-84, and Cys-70/Cys-75. Positions Ser-53 to Arg-64 are c. The a stretch occupies residues Gly-65 to Ala-85. The d stretch occupies residues Thr-86 to Glu-91. Residues Arg-92 to Lys-180 constitute a propeptide, e peptide. 3 O-linked (GalNAc...) threonine glycosylation sites follow: Thr-96, Thr-99, and Thr-163. Residues Leu-161–Lys-180 form a disordered region.

The protein belongs to the insulin family. In terms of assembly, interacts with MYORG; this interaction is required for IGF2 secretion. Interacts with integrins ITGAV:ITGB3 and ITGA6:ITGB4; integrin-binding is required for IGF2 signaling. Interacts with IGFBP2. Post-translationally, O-glycosylated with core 1 or possibly core 8 glycans. Thr-96 is a minor glycosylation site compared to Thr-99. In terms of processing, proteolytically processed by PCSK4, proIGF2 is cleaved at Arg-128 and Arg-92 to generate big-IGF2 and mature IGF2. As to expression, expressed in heart, placenta, lung, liver, muscle, kidney, tongue, limb, eye and pancreas.

It is found in the secreted. Its function is as follows. The insulin-like growth factors possess growth-promoting activity. Major fetal growth hormone in mammals. Plays a key role in regulating fetoplacental development. IGF2 is influenced by placental lactogen. Also involved in tissue differentiation. In adults, involved in glucose metabolism in adipose tissue, skeletal muscle and liver. Acts as a ligand for integrin which is required for IGF2 signaling. Positively regulates myogenic transcription factor MYOD1 function by facilitating the recruitment of transcriptional coactivators, thereby controlling muscle terminal differentiation. Inhibits myoblast differentiation and modulates metabolism via increasing the mitochondrial respiration rate. Preptin undergoes glucose-mediated co-secretion with insulin, and acts as a physiological amplifier of glucose-mediated insulin secretion. Exhibits osteogenic properties by increasing osteoblast mitogenic activity through phosphoactivation of MAPK1 and MAPK3. The protein is Insulin-like growth factor 2 of Homo sapiens (Human).